A 37-amino-acid chain; its full sequence is Unknown protein 25 (37 aa).

This Pseudotsuga menziesii (Douglas-fir) protein is Unknown protein 25.